The following is a 498-amino-acid chain: Archaemetzincin-1 (498 aa).

Histidine 261 is a Zn(2+) binding site. Glutamate 262 acts as the Proton acceptor in catalysis. Residues histidine 265, cysteine 272, cysteine 277, cysteine 296, and cysteine 299 each coordinate Zn(2+). Residues 332-381 (QEAGEPSVWEDTPPASADSGMCCESDSEPGTSVSEPLTPDAGSHTFASGP) are disordered.

This sequence belongs to the peptidase M54 family. Requires Zn(2+) as cofactor.

Functionally, probable zinc metalloprotease. The sequence is that of Archaemetzincin-1 (AMZ1) from Homo sapiens (Human).